Here is a 180-residue protein sequence, read N- to C-terminus: Probable DNA-directed RNA polymerase subunit delta (180 aa).

The region spanning leucine 14–tryptophan 81 is the HTH HARE-type domain. The tract at residues glutamate 89–glutamate 180 is disordered. The segment covering aspartate 115–isoleucine 163 has biased composition (acidic residues).

The protein belongs to the RpoE family. As to quaternary structure, RNAP is composed of a core of 2 alpha, a beta and a beta' subunits. The core is associated with a delta subunit and one of several sigma factors.

Participates in both the initiation and recycling phases of transcription. In the presence of the delta subunit, RNAP displays an increased specificity of transcription, a decreased affinity for nucleic acids, and an increased efficiency of RNA synthesis because of enhanced recycling. This chain is Probable DNA-directed RNA polymerase subunit delta, found in Lactobacillus johnsonii (strain CNCM I-12250 / La1 / NCC 533).